We begin with the raw amino-acid sequence, 203 residues long: CASP-like protein 2U2 (203 aa).

The interval 1 to 21 (MGGFVDDGAAGLAPSHGSSRA) is disordered. The Cytoplasmic portion of the chain corresponds to 1 to 27 (MGGFVDDGAAGLAPSHGSSRAGRGLEG). Residues 28–48 (AGVFLRFVASLLSIAGLMLLV) traverse the membrane as a helical segment. Residues 49–73 (KDNQTVQQMVATEAVTLETKYSDIS) are Extracellular-facing. N-linked (GlcNAc...) asparagine glycosylation is present at asparagine 51. The helical transmembrane segment at 74–94 (AFVFLLYTNGLVAVYCFFLAL) threads the bilayer. Topologically, residues 95-108 (ASVFSLIASARSGK) are cytoplasmic. A helical membrane pass occupies residues 109–129 (LAGWVTFVLDQGLAYVLLAAA). Over 130–163 (AASTEVLYLAENGDLKTSWAEICSQFGHFCHMAR) the chain is Extracellular. A helical membrane pass occupies residues 164 to 184 (ASIVVSFLSMLAMAVLSVMSA). Residues 185–203 (QQLFSKYRRPMTAKTAQDI) are Cytoplasmic-facing.

Belongs to the Casparian strip membrane proteins (CASP) family. As to quaternary structure, homodimer and heterodimers.

The protein localises to the cell membrane. This Osmunda lancea (Fern) protein is CASP-like protein 2U2.